Here is a 632-residue protein sequence, read N- to C-terminus: tRNA uridine 5-carboxymethylaminomethyl modification enzyme MnmG (632 aa).

13-18 (GGGHAG) is a binding site for FAD. Residue 274–288 (GPRYCPSIEDKVMRF) coordinates NAD(+).

This sequence belongs to the MnmG family. In terms of assembly, homodimer. Heterotetramer of two MnmE and two MnmG subunits. It depends on FAD as a cofactor.

It localises to the cytoplasm. NAD-binding protein involved in the addition of a carboxymethylaminomethyl (cmnm) group at the wobble position (U34) of certain tRNAs, forming tRNA-cmnm(5)s(2)U34. This is tRNA uridine 5-carboxymethylaminomethyl modification enzyme MnmG from Dichelobacter nodosus (strain VCS1703A).